The sequence spans 214 residues: Probable transaldolase (214 aa).

The active-site Schiff-base intermediate with substrate is the K83.

It belongs to the transaldolase family. Type 3B subfamily.

Its subcellular location is the cytoplasm. The catalysed reaction is D-sedoheptulose 7-phosphate + D-glyceraldehyde 3-phosphate = D-erythrose 4-phosphate + beta-D-fructose 6-phosphate. The protein operates within carbohydrate degradation; pentose phosphate pathway; D-glyceraldehyde 3-phosphate and beta-D-fructose 6-phosphate from D-ribose 5-phosphate and D-xylulose 5-phosphate (non-oxidative stage): step 2/3. Its function is as follows. Transaldolase is important for the balance of metabolites in the pentose-phosphate pathway. This chain is Probable transaldolase, found in Streptococcus pyogenes serotype M2 (strain MGAS10270).